We begin with the raw amino-acid sequence, 189 residues long: MKKIIIGLGNPGKEFQNTYHNIGFLALESFLKNNKHQMIPNSYQGHLYQIQLNNCISFLVKPQMYMNSSGKVVKKILDAYQIKIEDILVILDDIYLPEGKIKLRPQGGHAGHNGLRNIIECCNTNKFKRLKIGVGYDSNIPLNQYLLTPFNLHQKKQILQNIDKIHEIMSKFIQGISFNNLMNQYNVIK.

Position 15 (Phe15) interacts with tRNA. His20 functions as the Proton acceptor in the catalytic mechanism. Residues Tyr65, Asn67, and Asn113 each coordinate tRNA.

This sequence belongs to the PTH family. As to quaternary structure, monomer.

It is found in the cytoplasm. It carries out the reaction an N-acyl-L-alpha-aminoacyl-tRNA + H2O = an N-acyl-L-amino acid + a tRNA + H(+). Functionally, hydrolyzes ribosome-free peptidyl-tRNAs (with 1 or more amino acids incorporated), which drop off the ribosome during protein synthesis, or as a result of ribosome stalling. Catalyzes the release of premature peptidyl moieties from peptidyl-tRNA molecules trapped in stalled 50S ribosomal subunits, and thus maintains levels of free tRNAs and 50S ribosomes. In Phytoplasma australiense, this protein is Peptidyl-tRNA hydrolase.